Consider the following 65-residue polypeptide: Small ribosomal subunit protein eS27 (65 aa).

Zn(2+) contacts are provided by C20, C23, C39, and C42. The C4-type zinc-finger motif lies at C20–C42.

It belongs to the eukaryotic ribosomal protein eS27 family. Part of the 30S ribosomal subunit. Zn(2+) serves as cofactor.

This Pyrococcus horikoshii (strain ATCC 700860 / DSM 12428 / JCM 9974 / NBRC 100139 / OT-3) protein is Small ribosomal subunit protein eS27.